The chain runs to 307 residues: Protein ORANGE, chloroplastic (307 aa).

The N-terminal 55 residues, 1 to 55 (MSSLGRILSVSYPPDPYTWRFSQYKLSSSLGRNRRLRWRFTALDPESSSLDSESS), are a transit peptide targeting the chloroplast. Residue Lys58 forms a Glycyl lysine isopeptide (Lys-Gly) (interchain with G-Cter in ubiquitin) linkage. 2 consecutive transmembrane segments (helical) span residues 146-166 (VYYATCFSLIAGIILFGGLLA) and 199-219 (IVASFSGGAVGVISALMVVEV). The segment at 208–299 (VGVISALMVV…CTGMAMASEH (92 aa)) is CR-type-like. Residues 230-237 (CKYCLGTG) form a CXXCXGXG motif repeat. Residues 241-248 (CARCSSTG) form a CXXCXXXG motif repeat. The stretch at 274 to 281 (CSNCSGAG) is one CXXCXGXG motif repeat. One copy of the CXXCXXXG motif repeat lies at 285–292 (CPTCLCTG).

This sequence belongs to the orange-like family. In terms of assembly, interacts with the phytoene synthase PSY1 in chloroplast. Binds to the eukaryotic release factor eRF1-2. Interacts with the transcription factor TCP14 in the nucleus to repress chloroplast biogenesis in etiolated seedlings. Associates to the E2 ubiquitin-conjugating enzyme UBC19. Ubiquitination at K-58 by UBC19 is essential for nuclear localization.

It is found in the plastid. The protein resides in the chloroplast membrane. The protein localises to the nucleus. It localises to the cytoplasm. Functionally, involved in chromoplast differentiation. Associated with a cellular process that triggers the differentiation of pro-plastids or other non-colored plastids into chromoplasts for carotenoid accumulation. Is associated with carotenoid accumulation in chromoplasts. Functions as a major regulator of the phytoene synthase PSY1 protein level and activity. Modulates carotenoid biosynthesis by means of post-transcriptional regulation of PSY1. Modulates carotenoid biosynthesis in part by up-regulating a series of endogenous carotenogenic genes. Regulates cell elongation in the petiole in an eRF1-2-dependent manner. Binds to and represses TCP14 transactivation activity, thus preventing early light-induced proteins (ELIPs, e.g. ELIP1 and ELIP2) expression and delaying chloroplast biogenesis (e.g. lower chlorophyll biosynthesis and slower development of thylakoid membranes) in germinating cotyledons and etiolated seedlings; reduced levels upon illumination combined to TCP14 accumulation derepress chloroplast biogenesis during deetiolation. In Arabidopsis thaliana (Mouse-ear cress), this protein is Protein ORANGE, chloroplastic.